Consider the following 1154-residue polypeptide: BEACH domain-containing protein lvsF (1154 aa).

Disordered regions lie at residues 92–123 and 139–167; these read HLPT…EQPS and TSKV…PTPT. Pro residues predominate over residues 145-158; the sequence is PTPPTPTPTPPTPQ. Positions 289–384 constitute a BEACH-type PH domain; the sequence is DMNERNILEL…TRNQVYDLLV (96 aa). The BEACH domain occupies 389 to 697; the sequence is TNIMHINEQA…QIFKTPHPQR (309 aa). 3 disordered regions span residues 554 to 575, 739 to 762, and 779 to 825; these read SFES…NFEN, NNLN…LNNN, and NSLN…ENLN. Composition is skewed to low complexity over residues 779 to 788 and 795 to 822; these read NSLNNENNEN and NSNS…NENE. WD repeat units lie at residues 858–897, 900–939, 942–980, 992–1031, 1034–1074, 1076–1110, and 1119–1154; these read LHKD…QIRS, LCNL…ISYS, GHSD…NGAI, DSDT…LIRR, CFFD…FSFK, KGEI…EIKD, and SSNE…IWQQ.

The chain is BEACH domain-containing protein lvsF (lvsF) from Dictyostelium discoideum (Social amoeba).